A 160-amino-acid chain; its full sequence is Small ribosomal subunit protein uS7 (160 aa).

The protein belongs to the universal ribosomal protein uS7 family. In terms of assembly, part of the 30S ribosomal subunit. Contacts proteins S9 and S11.

One of the primary rRNA binding proteins, it binds directly to 16S rRNA where it nucleates assembly of the head domain of the 30S subunit. Is located at the subunit interface close to the decoding center, probably blocks exit of the E-site tRNA. This chain is Small ribosomal subunit protein uS7, found in Rickettsia akari (strain Hartford).